A 245-amino-acid chain; its full sequence is Homeobox protein Hox-A4a (245 aa).

A disordered region spans residues 34-99 (DYYERPKDPG…HGPRLTTESC (66 aa)). Over residues 35–51 (YYERPKDPGFPHHEEAS) the composition is skewed to basic and acidic residues. 2 stretches are compositionally biased toward polar residues: residues 53 to 73 (PRSNYQEQSYDYGNVSTNDLN) and 82 to 99 (QPQSVSQNHGPRLTTESC). The short motif at 126–131 (VYPWMK) is the Antp-type hexapeptide element. The segment at residues 147–206 (PKRSRTAYTRQQALELEKEFHFNRYLTRRRRVEIAHTMCLSERQVKIWFQNRRMKWKKDH) is a DNA-binding region (homeobox). The segment at 205-245 (DHKLPNTKIRSSSSAPSNHHVKTDATQQQQTLLPTPCSSNL) is disordered. Over residues 212-221 (KIRSSSSAPS) the composition is skewed to polar residues. Positions 230-245 (TQQQQTLLPTPCSSNL) are enriched in low complexity.

Belongs to the Antp homeobox family. Deformed subfamily.

The protein resides in the nucleus. In terms of biological role, sequence-specific transcription factor which is part of a developmental regulatory system that provides cells with specific positional identities on the anterior-posterior axis. This is Homeobox protein Hox-A4a (hoxa4a) from Danio rerio (Zebrafish).